The chain runs to 86 residues: Putative defensin-like protein 244 (86 aa).

The first 22 residues, 1–22 (MKGIAMLLVSCLLFSFLSTNLA), serve as a signal peptide directing secretion. Disulfide bonds link Cys-28-Cys-83, Cys-38-Cys-67, Cys-48-Cys-77, and Cys-65-Cys-79.

The protein belongs to the DEFL family.

It is found in the secreted. The protein is Putative defensin-like protein 244 (SCRL11) of Arabidopsis thaliana (Mouse-ear cress).